A 358-amino-acid polypeptide reads, in one-letter code: Trace amine-associated receptor 7f (358 aa).

Residues 1–47 (MSIADETVSWNQDSILSRDLFSATSAELCYENLNRSCVRSPYSPGPR) lie on the Extracellular side of the membrane. Asn-34 carries an N-linked (GlcNAc...) asparagine glycan. Cystine bridges form between Cys-37-Cys-201 and Cys-120-Cys-205. The chain crosses the membrane as a helical span at residues 48-68 (LILYAVFGFGAVLAVCGNLLV). The Cytoplasmic segment spans residues 69 to 83 (MTSILHFRQLHSPAN). A helical transmembrane segment spans residues 84–104 (FLVASLACADFLVGVMVMPFS). The Extracellular portion of the chain corresponds to 105 to 121 (MVRSVEGCWYFGDSYCK). A helical transmembrane segment spans residues 122–143 (LHTCFDVSFCYCSLFHLCFISV). The Cytoplasmic portion of the chain corresponds to 144–166 (DRYIAVSDPLAYPTRFTASVSGK). Residues 167 to 187 (CITFSWLLSISYGFSLIYTGA) form a helical membrane-spanning segment. The Extracellular segment spans residues 188 to 212 (SEAGLEDLVSSLTCVGGCQIAVNQT). An N-linked (GlcNAc...) asparagine glycan is attached at Asn-210. Residues 213–233 (WVFINFSVFLIPTLVMITVYS) traverse the membrane as a helical segment. Over 234–274 (KIFLIAKQQAQNIEKMSKQTARASDSYKDRVAKRERKAAKT) the chain is Cytoplasmic. Residues 275–295 (LGIAVAAFLLSWLPYFIDSFI) form a helical membrane-spanning segment. At 296–309 (DAFLGFITPTYVYE) the chain is on the extracellular side. A helical membrane pass occupies residues 310–333 (ILVWIVYYNSAMNPLIYAFFYPWF). At 334–358 (RKAIKLTVTGKILRENSSTTNLFSE) the chain is on the cytoplasmic side.

It belongs to the G-protein coupled receptor 1 family. Specifically expressed in neurons of the olfactory epithelium.

Its subcellular location is the cell membrane. Functionally, olfactory receptor activated by trace amines, such as N-methylpiperidine and N,N-dimethylcyclohexylamine. Trace amine compounds are enriched in animal body fluids and act on trace amine-associated receptors (TAARs) to elicit both intraspecific and interspecific innate behaviors. Ligand-binding causes a conformation change that triggers signaling via G(s)-class of G alpha proteins (GNAL or GNAS). This chain is Trace amine-associated receptor 7f, found in Mus musculus (Mouse).